The chain runs to 247 residues: 3,4-dihydroxy-2-butanone 4-phosphate synthase (247 aa).

D-ribulose 5-phosphate is bound by residues 38-39, Asp43, 179-183, and Glu203; these read RE and RMGQT. Glu39 lines the Mg(2+) pocket.

This sequence belongs to the DHBP synthase family. In terms of assembly, homodimer. Mg(2+) is required as a cofactor. It depends on Mn(2+) as a cofactor.

The enzyme catalyses D-ribulose 5-phosphate = (2S)-2-hydroxy-3-oxobutyl phosphate + formate + H(+). It participates in cofactor biosynthesis; riboflavin biosynthesis; 2-hydroxy-3-oxobutyl phosphate from D-ribulose 5-phosphate: step 1/1. Functionally, catalyzes the conversion of D-ribulose 5-phosphate to formate and 3,4-dihydroxy-2-butanone 4-phosphate. In Methanosarcina acetivorans (strain ATCC 35395 / DSM 2834 / JCM 12185 / C2A), this protein is 3,4-dihydroxy-2-butanone 4-phosphate synthase.